Here is a 668-residue protein sequence, read N- to C-terminus: Ecdysone oxidase (668 aa).

Residues 137–140, V270, and 536–537 each bind FAD; these read NHMV and WH. H537 (proton acceptor) is an active-site residue.

It belongs to the GMC oxidoreductase family. Requires FAD as cofactor.

It carries out the reaction ecdysone + O2 = 3-dehydroecdysone + H2O2. Its function is as follows. Involved in the inactivation of ecdysteroid molting hormones by converting ecdysteroids into 3-dehydroecdysteroids. The protein is Ecdysone oxidase of Bombyx mori (Silk moth).